Consider the following 397-residue polypeptide: Lysophospholipid transporter LplT (397 aa).

Topologically, residues 1–17 (MSESVHTNTSLWSKGMK) are periplasmic. The chain crosses the membrane as a helical span at residues 18–38 (AVIVAQFLSAFGDNALLFATL). The Cytoplasmic segment spans residues 39-52 (ALLKAQFYPEWSQP). The helical transmembrane segment at 53-73 (VLQMVFVGAYILFAPFVGQVA) threads the bilayer. Residues 74–90 (DSFAKGRVMMFANGLKL) lie on the Periplasmic side of the membrane. A helical transmembrane segment spans residues 91 to 111 (LGAASICFGFNPFVGYTLVGI). The Cytoplasmic segment spans residues 112-144 (GAAAYSPAKYGILGELTTGDKLVKANGLMEAST). A helical transmembrane segment spans residues 145–165 (IAAILLGSVAGGVLADLHVLV). Ala-166 is a topological domain (periplasmic). Residues 167 to 187 (LAACALAYAGAVAANIYIPKL) form a helical membrane-spanning segment. The Cytoplasmic segment spans residues 188–226 (AAARPGQSWNVLKMTCSFKSACTSLWQNGETRFSLVGTS). A helical transmembrane segment spans residues 227–247 (LFWGAGVTLRFLLVLWVPVAL). The Periplasmic segment spans residues 248–256 (GITDNATPT). Residues 257 to 277 (YLNAMVAIGIVLGAGAAAKLV) form a helical membrane-spanning segment. The Cytoplasmic portion of the chain corresponds to 278-280 (TLE). A helical transmembrane segment spans residues 281 to 301 (TVSRCMPAGILIGVVVLFFSL). Residues 302 to 304 (QHE) lie on the Periplasmic side of the membrane. A helical transmembrane segment spans residues 305–325 (LLPAYALLMLIGVLGGFFVVP). The Cytoplasmic segment spans residues 326–343 (LNALLQERGKKSVGAGNA). A helical membrane pass occupies residues 344-364 (IAVQNLGENSAMLLMLGIYSL). The Periplasmic portion of the chain corresponds to 365–366 (AV). Residues 367-387 (LVGIPVVPIGIGFGTLFALAI) form a helical membrane-spanning segment. Residues 388-397 (TALWIWQRRH) are Cytoplasmic-facing.

This sequence belongs to the major facilitator superfamily. LplT (TC 2.A.1.42) family.

It is found in the cell inner membrane. Its function is as follows. Catalyzes the facilitated diffusion of 2-acyl-glycero-3-phosphoethanolamine (2-acyl-GPE) into the cell. This is Lysophospholipid transporter LplT from Escherichia fergusonii (strain ATCC 35469 / DSM 13698 / CCUG 18766 / IAM 14443 / JCM 21226 / LMG 7866 / NBRC 102419 / NCTC 12128 / CDC 0568-73).